A 227-amino-acid chain; its full sequence is 7-cyano-7-deazaguanine synthase (227 aa).

7–17 (LSGGLDSSTIL) is an ATP binding site. Zn(2+)-binding residues include cysteine 191, cysteine 199, cysteine 202, and cysteine 205.

The protein belongs to the QueC family. It depends on Zn(2+) as a cofactor.

It catalyses the reaction 7-carboxy-7-deazaguanine + NH4(+) + ATP = 7-cyano-7-deazaguanine + ADP + phosphate + H2O + H(+). It functions in the pathway purine metabolism; 7-cyano-7-deazaguanine biosynthesis. Its function is as follows. Catalyzes the ATP-dependent conversion of 7-carboxy-7-deazaguanine (CDG) to 7-cyano-7-deazaguanine (preQ(0)). The polypeptide is 7-cyano-7-deazaguanine synthase (Trichormus variabilis (strain ATCC 29413 / PCC 7937) (Anabaena variabilis)).